We begin with the raw amino-acid sequence, 363 residues long: Dual-specificity RNA methyltransferase RlmN (363 aa).

Glu-102 functions as the Proton acceptor in the catalytic mechanism. The Radical SAM core domain occupies 108-344 (EKKRSTLCVS…TTTIRKNRGE (237 aa)). Cysteines 115 and 350 form a disulfide. Cys-122, Cys-126, and Cys-129 together coordinate [4Fe-4S] cluster. Residues 174 to 175 (GE), Ser-206, 228 to 230 (SLH), and Asn-307 each bind S-adenosyl-L-methionine. The active-site S-methylcysteine intermediate is Cys-350.

Belongs to the radical SAM superfamily. RlmN family. [4Fe-4S] cluster serves as cofactor.

It is found in the cytoplasm. The enzyme catalyses adenosine(2503) in 23S rRNA + 2 reduced [2Fe-2S]-[ferredoxin] + 2 S-adenosyl-L-methionine = 2-methyladenosine(2503) in 23S rRNA + 5'-deoxyadenosine + L-methionine + 2 oxidized [2Fe-2S]-[ferredoxin] + S-adenosyl-L-homocysteine. The catalysed reaction is adenosine(37) in tRNA + 2 reduced [2Fe-2S]-[ferredoxin] + 2 S-adenosyl-L-methionine = 2-methyladenosine(37) in tRNA + 5'-deoxyadenosine + L-methionine + 2 oxidized [2Fe-2S]-[ferredoxin] + S-adenosyl-L-homocysteine. Its function is as follows. Specifically methylates position 2 of adenine 2503 in 23S rRNA and position 2 of adenine 37 in tRNAs. m2A2503 modification seems to play a crucial role in the proofreading step occurring at the peptidyl transferase center and thus would serve to optimize ribosomal fidelity. The chain is Dual-specificity RNA methyltransferase RlmN from Buchnera aphidicola subsp. Acyrthosiphon pisum (strain APS) (Acyrthosiphon pisum symbiotic bacterium).